The sequence spans 340 residues: Melanin-concentrating hormone receptor 2 (340 aa).

The Extracellular segment spans residues 1–39 (MNPFHASCWNTSAELLNKSWNKEFAYQTASVVDTVILPS). N-linked (GlcNAc...) asparagine glycosylation is found at asparagine 10 and asparagine 17. The chain crosses the membrane as a helical span at residues 40–60 (MIGIICSTGLVGNILIVFTII). Over 61–69 (RSRKKTVPD) the chain is Cytoplasmic. The helical transmembrane segment at 70-90 (IYICNLAVADLVHIVGMPFLI) threads the bilayer. Residues 91 to 104 (HQWARGGEWVFGGP) are Extracellular-facing. A helical transmembrane segment spans residues 105-129 (LCTIITSLDTCNQFACSAIMTVMSV). The Cytoplasmic segment spans residues 130–154 (DRYFALVQPFRLTRWRTRYKTIRIN). Residues 155-175 (LGLWAASFILALPVWVYSKVI) traverse the membrane as a helical segment. The Extracellular portion of the chain corresponds to 176-200 (KFKDGVESCAFDLTSPDDVLWYTLY). A helical membrane pass occupies residues 201–221 (LTITTFFFPLPLILVCYILIL). Over 222–252 (CYTWEMYQQNKDARCCNPSVPKQRVMKLTKM) the chain is Cytoplasmic. The helical transmembrane segment at 253 to 273 (VLVLVVVFILSAAPYHVIQLV) threads the bilayer. Topologically, residues 274-288 (NLQMEQPTLAFYVGY) are extracellular. Residues 289-309 (YLSICLSYASSSINPFLYILL) form a helical membrane-spanning segment. Over 310 to 340 (SGNFQKRLPQIQRRATEKEINNMGNTLKSHF) the chain is Cytoplasmic.

Belongs to the G-protein coupled receptor 1 family. In terms of tissue distribution, specifically expressed in the brain, with highest levels in cerebral cortex, hippocampus and amygdala. No expression detected in the cerebellum, thalamus or hypothalamus.

The protein resides in the cell membrane. Functionally, receptor for melanin-concentrating hormone, coupled to G proteins that activate phosphoinositide hydrolysis. The protein is Melanin-concentrating hormone receptor 2 (MCHR2) of Homo sapiens (Human).